A 312-amino-acid polypeptide reads, in one-letter code: Methionyl-tRNA formyltransferase (312 aa).

(6S)-5,6,7,8-tetrahydrofolate is bound at residue Ser109–Pro112.

It belongs to the Fmt family.

It catalyses the reaction L-methionyl-tRNA(fMet) + (6R)-10-formyltetrahydrofolate = N-formyl-L-methionyl-tRNA(fMet) + (6S)-5,6,7,8-tetrahydrofolate + H(+). Its function is as follows. Attaches a formyl group to the free amino group of methionyl-tRNA(fMet). The formyl group appears to play a dual role in the initiator identity of N-formylmethionyl-tRNA by promoting its recognition by IF2 and preventing the misappropriation of this tRNA by the elongation apparatus. This chain is Methionyl-tRNA formyltransferase, found in Anaeromyxobacter dehalogenans (strain 2CP-C).